The primary structure comprises 130 residues: Small ribosomal subunit protein uS9 (130 aa).

The protein belongs to the universal ribosomal protein uS9 family.

The sequence is that of Small ribosomal subunit protein uS9 from Nitratidesulfovibrio vulgaris (strain ATCC 29579 / DSM 644 / CCUG 34227 / NCIMB 8303 / VKM B-1760 / Hildenborough) (Desulfovibrio vulgaris).